Consider the following 277-residue polypeptide: MADPWQECMDYAVILARQAGEMIREALKNKMDVMIKSSPADLVTVTDQKVEKMLMSSIKEKYPYHSFIGEESVASGEKTVFTEQPTWIIDPIDGTTNFVHRFPFVAVSIGFVVNKEMEFGVVYSCVEDKMYTGRKGKGAFCNGQKLRVSQQEDITKSLLVTELGSSRKPETLRIVLSNMERLCSIPIHGIRSVGTAAVNMCLVATGGADAYYEMGIHCWDMAGAGIIVIEAGGVLLDVTGGPFDLMSRRIIAASNIALAERIAKELEIIPLQRDDES.

E70, D90, I92, and D93 together coordinate Mg(2+). E70 is a binding site for substrate. Substrate is bound by residues 92 to 95 (IDGT), 194 to 196 (GTA), E213, and D220. D220 provides a ligand contact to Mg(2+).

This sequence belongs to the inositol monophosphatase superfamily. Homodimer. Requires Mg(2+) as cofactor. Ubiquitous.

It localises to the cytoplasm. It catalyses the reaction a myo-inositol phosphate + H2O = myo-inositol + phosphate. It carries out the reaction 1D-myo-inositol 1-phosphate + H2O = myo-inositol + phosphate. The enzyme catalyses 1D-myo-inositol 2-phosphate + H2O = myo-inositol + phosphate. The catalysed reaction is 1D-myo-inositol 3-phosphate + H2O = myo-inositol + phosphate. It catalyses the reaction 1D-myo-inositol 4-phosphate + H2O = myo-inositol + phosphate. It carries out the reaction 1D-myo-inositol 5-phosphate + H2O = myo-inositol + phosphate. The enzyme catalyses 1D-myo-inositol 6-phosphate + H2O = myo-inositol + phosphate. The catalysed reaction is scyllo-inositol 1-phosphate + H2O = scyllo-inositol + phosphate. It catalyses the reaction alpha-D-galactose 1-phosphate + H2O = D-galactose + phosphate. It carries out the reaction alpha-D-glucose 1-phosphate + H2O = D-glucose + phosphate. The enzyme catalyses D-glucose 6-phosphate + H2O = D-glucose + phosphate. The catalysed reaction is beta-D-fructose 1-phosphate + H2O = D-fructose + phosphate. It catalyses the reaction glycerol 2-phosphate + H2O = glycerol + phosphate. It carries out the reaction adenosine 2'-phosphate + H2O = adenosine + phosphate. The protein operates within polyol metabolism; myo-inositol biosynthesis; myo-inositol from D-glucose 6-phosphate: step 2/2. Its activity is regulated as follows. Activity with myo-inositol monophosphate and D-galactose 1-phosphate is inhibited by Li(+), Ca(2+) and Mn(2+), but also by Mg(2+) at concentrations above 3 mM. Its function is as follows. Phosphatase involved in the dephosphorylation of myo-inositol monophosphate to generate myo-inositol. Is also able to dephosphorylate scyllo-inositol-phosphate, myo-inositol 1,4-diphosphate, scyllo-inositol-1,3-diphosphate and scyllo-inositol-1,4-diphosphate. Also dephosphorylates in vitro other sugar-phosphates including D-galactose-1-phosphate, glucose-1-phosphate, glucose-6-phosphate, fructose-1-phosphate, beta-glycerophosphate and 2'-AMP. Responsible for the provision of inositol required for synthesis of phosphatidylinositol and polyphosphoinositides, and involved in maintaining normal brain function. Has been implicated as the pharmacological target for lithium Li(+) action in brain. Is equally active with myo-inositol monophosphate and D-galactose 1-phosphate. This Rattus norvegicus (Rat) protein is Inositol monophosphatase 1 (Impa1).